A 180-amino-acid chain; its full sequence is GTP cyclohydrolase 1 (180 aa).

Zn(2+) contacts are provided by cysteine 71, histidine 74, and cysteine 142.

This sequence belongs to the GTP cyclohydrolase I family. In terms of assembly, toroid-shaped homodecamer, composed of two pentamers of five dimers.

It catalyses the reaction GTP + H2O = 7,8-dihydroneopterin 3'-triphosphate + formate + H(+). The protein operates within cofactor biosynthesis; 7,8-dihydroneopterin triphosphate biosynthesis; 7,8-dihydroneopterin triphosphate from GTP: step 1/1. This is GTP cyclohydrolase 1 from Helicobacter pylori (strain HPAG1).